The primary structure comprises 252 residues: Transmembrane ascorbate-dependent reductase CYB561 (252 aa).

N-acetylmethionine is present on M1. Topologically, residues 1–17 are cytoplasmic; it reads MEGPASPARAPGALPYY. Residues 18–38 form a helical membrane-spanning segment; it reads VAFSQLLGLIVVAMTGAWLGM. A Cytochrome b561 domain is found at 20–221; that stretch reads FSQLLGLIVV…FATVILYILT (202 aa). Over 39-52 the chain is Vesicular; that stretch reads YRGGIAWESALQFN. A helical transmembrane segment spans residues 53-73; sequence VHPLCMIIGLVFLQGDALLVY. H54, R74, and K81 together coordinate heme b. Over 74 to 86 the chain is Cytoplasmic; sequence RVFRNEAKRTTKV. L-ascorbate contacts are provided by K81 and K85. The helical transmembrane segment at 87–107 threads the bilayer; the sequence is LHGLLHVFAFVIALVGLVAVF. Heme b is bound by residues H88, 117 to 120, and H122; that span reads DLYS. Over 108 to 125 the chain is Vesicular; it reads EHHRKKGYADLYSLHSWC. A helical membrane pass occupies residues 126–146; sequence GILVFALFFAQWLVGFSFFLF. Topologically, residues 147-159 are cytoplasmic; it reads PGASFSLRSRYRP. Position 154 (R154) interacts with L-ascorbate. A helical transmembrane segment spans residues 160–180; sequence QHVFFGAAIFLLSVATALLGL. 2 residues coordinate heme b: H161 and E182. Topologically, residues 181-199 are vesicular; the sequence is KEALLFELGTKYSMFEPEG. Residues 200–220 form a helical membrane-spanning segment; it reads VLANVLGLLLATFATVILYIL. Over 221–252 the chain is Cytoplasmic; sequence TRADWKRPLQAEEQALSMDFKTLTEGDSPSSQ. K226 contacts heme b. A phosphoserine mark is found at S248 and S250.

Requires heme b as cofactor. Expressed in the adrenal medulla and all brain regions, but not in visceral organs.

It is found in the cytoplasmic vesicle. Its subcellular location is the secretory vesicle. The protein localises to the chromaffin granule membrane. The enzyme catalyses monodehydro-L-ascorbate radical(out) + L-ascorbate(in) = monodehydro-L-ascorbate radical(in) + L-ascorbate(out). Functionally, transmembrane reductase that uses ascorbate as an electron donor in the cytoplasm and transfers electrons across membranes to reduce monodehydro-L-ascorbate radical in the lumen of secretory vesicles. It is therefore involved the regeneration and homeostasis within secretory vesicles of ascorbate which in turn provides reducing equivalents needed to support the activity of intravesicular enzymes. This is Transmembrane ascorbate-dependent reductase CYB561 (CYB561) from Bos taurus (Bovine).